Consider the following 72-residue polypeptide: Putative snRNP Sm-like protein (72 aa).

A Sm domain is found at 4–72 (RPLDILNDAL…RGDNVVYVSP (69 aa)).

The protein belongs to the snRNP Sm proteins family.

This Methanococcoides burtonii (strain DSM 6242 / NBRC 107633 / OCM 468 / ACE-M) protein is Putative snRNP Sm-like protein.